Consider the following 1500-residue polypeptide: MPVRPDLQQLEKCIDDALRKNDFKPLLALLQIDICEDVKIKCSKQFLRKLDDLICRELNKKDIQTVSSILISIGRCSKNIFILGQAGLQTMIKQGLVQKMVSWFENSKEIILNQQQSKDEAVMNMIEDLFDLLMVIYDISDEGKNQVLESFIPQICALVIDSRVNFCIQQEALKKMNLMLDRIPQDANKILSNQEMLTLMSNMGERILDVGDYELQVGIVEALCRMTTEKRRQELAYEWFSMDFIANAFKEIKDCEFETDCRIFLNLVNGILGDKRRVYTFPCLSAFLGKYELQIPSDEKLEEFWIDFNLGSHTLSFYIAGDEEDHQWEAVTVPEEKVQMYNIEVRESKKLLTLTLKNIVKISKKEGKELLFYFDESLEITNVTKKVFGGNKYKEFTRKQGISVAKTSIHVLFDASGSQILVPESQPSPVKENLIHLKEKSDIQKKLVNPLELGNSSSQDEITTPSRKKMSEASMIVPDTDRYTVRSPILLINTSTPRRSREPLQAINSVEKAVSKTSESGMDYAASPKSRQSDGRKRWNNRANHNKTTAVIQNKQYEDNESPDQNFNEIEDTLSNVSSAVGKVDKPVLPGVLDISKNTTHSRWACWTPVTTIKLCNNQRSRALPGDTCTQDTGVNKKCTKQKSVSDDDSEETQKGKYSKDVIKCNKSDEAEFCERNIQEQNHPKYSQKKNTANAKKSDWHIESETTYKSVLLNKTTEESLIYKKTCVLSKDVNTTICDKSPSRKSKRNHTKSRKELMSELTSCELEEIPVRENSKGKRFTGASESLINQISRRYNPSDSMMSTRKLKEPQDGSGFSKKPDLQFNKVQRKSYRKLKATVVNVTSECPLDDVYNFSLNGADEPVIKLGIQEFQATTREASMDNSLKLVKNHDEHDPFLKTKDKRMLSYEKKTLLSDTETECGCDDSKTDISWLKEPKTKRLMDYSRNKNTTKYKSRKSRSSMEKGQPRPTMVLNKNSMKNDYEVVVDGRTRLPRRATKTKKNYKDLSTSESESESEKECSYLFKDKLPTKEETIHSRAQTKKLPEKQQKVFNSEALKGQPSEEQKNSSRLREGREDSLCLSSASVSRSSSSVEVMRCTEKITERDFTQDYDYITKSLSPYPKAPSPEFLNGNNSVVGRGQSPRISETSAMCVRKSYSPASGPPFSPRHTPTKNNSVVNMKKANSVINNQRTQHCNSYSDVSSNSSEKLYMEPESPESCDNHMQNKREGNHAASPLSLSSEKIEKMWFDMPSENTHVSGPSQRGSKRRMYLEDDELSNSNEAEVEEAEEREHLLSKKRCQWENSDQHTFKTSLSTPDFSVPKDWQQELQGAGMFYDNISSDYKRKTDSQHKIMDDFTTKTLKLTQQHLMAMTSQAQGRRDENVEKFQVTLLDELEKVEKDSQTLRDLEKELVDIEEKLVQKMRAYHRCERERFRVLKTSLDKSFLVYNSVYEESVFTSEMCLMKANMKMLQDKLLKEMHEEEVLNIRRGLQSLFKAHEGNDA.

Phosphoserine occurs at positions 457 and 458. Position 464 is a phosphothreonine (threonine 464). Serine 487 is subject to Phosphoserine. Threonine 496 carries the phosphothreonine modification. Serine 500, serine 509, serine 518, and serine 527 each carry phosphoserine. Positions 512–548 (KAVSKTSESGMDYAASPKSRQSDGRKRWNNRANHNKT) are disordered. Phosphothreonine is present on residues threonine 608 and threonine 633. Serine 646, serine 650, and serine 741 each carry phosphoserine. Residues 796-820 (NPSDSMMSTRKLKEPQDGSGFSKKP) form a disordered region. Residue serine 914 is modified to Phosphoserine. A Phosphothreonine modification is found at threonine 916. Disordered stretches follow at residues 940–1010 (LMDY…TSES) and 1029–1084 (KEET…SASV). Positions 948 to 958 (NTTKYKSRKSR) are enriched in basic residues. A compositionally biased stretch (basic and acidic residues) spans 977–989 (MKNDYEVVVDGRT). Positions 990–1000 (RLPRRATKTKK) are enriched in basic residues. Residues 1059 to 1076 (PSEEQKNSSRLREGREDS) show a composition bias toward basic and acidic residues. 9 positions are modified to phosphoserine: serine 1115, serine 1117, serine 1124, serine 1133, serine 1140, serine 1144, serine 1156, serine 1159, and serine 1164. At threonine 1168 the chain carries Phosphothreonine. Residues serine 1183, serine 1213, and serine 1216 each carry the phosphoserine modification. The segment at 1208-1234 (YMEPESPESCDNHMQNKREGNHAASPL) is disordered. Basic and acidic residues predominate over residues 1217–1228 (CDNHMQNKREGN). Serine 1232, serine 1275, and serine 1277 each carry phosphoserine. Threonine 1313 carries the phosphothreonine modification. A coiled-coil region spans residues 1388 to 1429 (LLDELEKVEKDSQTLRDLEKELVDIEEKLVQKMRAYHRCERE).

Belongs to the SYCP2 family. In terms of assembly, component of the lateral elements of synaptonemal complexes. Heterodimer with SYCP3. Interacts with SMC1A and SMC3. Interacts with TEX11. Phosphorylated. Detected in testis and spermatocytes (at protein level).

Its subcellular location is the nucleus. It localises to the chromosome. Functionally, major component of the axial/lateral elements of synaptonemal complexes (SCS) during meiotic prophase. Plays a role in the assembly of synaptonemal complexes. Required for normal meiotic chromosome synapsis during oocyte and spermatocyte development and for normal male and female fertility. Required for insertion of SYCP3 into synaptonemal complexes. May be involved in the organization of chromatin by temporarily binding to DNA scaffold attachment regions. Requires SYCP3, but not SYCP1, in order to be incorporated into the axial/lateral elements. This chain is Synaptonemal complex protein 2 (Sycp2), found in Mus musculus (Mouse).